A 1016-amino-acid polypeptide reads, in one-letter code: Calmodulin-binding transcription activator 4 (1016 aa).

The segment at residues 38–164 (ISTLYQEAHS…YRDVSEREEG (127 aa)) is a DNA-binding region (CG-1). The segment at 324-343 (KNGSGPSGGTGGSGDQGSES) is disordered. Positions 328 to 338 (GPSGGTGGSGD) are enriched in gly residues. ANK repeat units follow at residues 647–676 (QEQG…NVDF), 680–709 (KGWS…SAGA), and 719–748 (NGKT…TNHL). The segment at 753-786 (LEETENSKDTAQVQTEKTLNSISEQSPSGNEDQV) is disordered. Residues 761–785 (DTAQVQTEKTLNSISEQSPSGNEDQ) are compositionally biased toward polar residues. IQ domains follow at residues 798–827 (AAQA…LVAC), 855–884 (YNSA…KVVK), and 878–907 (LRQK…AVRI). Residues 903–925 (WAVRILDKVVLRWRRKGVGLRGF) are calmodulin-binding. 2 positions are modified to phosphoserine: S935 and S962.

Belongs to the CAMTA family. Expressed in roots, stems, leaves, flowers and siliques.

Its subcellular location is the nucleus. Functionally, transcription activator that binds to the DNA consensus sequence 5'-[ACG]CGCG[GTC]-3'. Regulates transcriptional activity in response to calcium signals. Binds calmodulin in a calcium-dependent manner. Involved together with CAMTA2 and CAMTA3 in the positive regulation of a general stress response. The chain is Calmodulin-binding transcription activator 4 from Arabidopsis thaliana (Mouse-ear cress).